The primary structure comprises 109 residues: Cell division protein ZapA (109 aa).

Positions 21 to 99 (PEQLDALNQA…IEQALLEQGR (79 aa)) form a coiled coil.

This sequence belongs to the ZapA family. Type 1 subfamily. Homodimer. Interacts with FtsZ.

The protein localises to the cytoplasm. Its function is as follows. Activator of cell division through the inhibition of FtsZ GTPase activity, therefore promoting FtsZ assembly into bundles of protofilaments necessary for the formation of the division Z ring. It is recruited early at mid-cell but it is not essential for cell division. This is Cell division protein ZapA from Edwardsiella ictaluri (strain 93-146).